Here is a 575-residue protein sequence, read N- to C-terminus: Isocitrate dehydrogenase kinase/phosphatase (575 aa).

ATP-binding positions include 316–322 and Lys-337; that span reads ARGDKGL. Asp-372 is a catalytic residue.

Belongs to the AceK family.

The protein localises to the cytoplasm. It catalyses the reaction L-seryl-[isocitrate dehydrogenase] + ATP = O-phospho-L-seryl-[isocitrate dehydrogenase] + ADP + H(+). Its function is as follows. Bifunctional enzyme which can phosphorylate or dephosphorylate isocitrate dehydrogenase (IDH) on a specific serine residue. This is a regulatory mechanism which enables bacteria to bypass the Krebs cycle via the glyoxylate shunt in response to the source of carbon. When bacteria are grown on glucose, IDH is fully active and unphosphorylated, but when grown on acetate or ethanol, the activity of IDH declines drastically concomitant with its phosphorylation. This is Isocitrate dehydrogenase kinase/phosphatase from Anaeromyxobacter sp. (strain Fw109-5).